The chain runs to 776 residues: Systemic RNA interference defective protein 1 (776 aa).

Positions 1 to 17 (MIRVYLIILMHLVIGLT) are cleaved as a signal peptide. The Extracellular segment spans residues 18–319 (QNNSTTPSPI…ENQSYAVPTA (302 aa)). N-linked (GlcNAc...) asparagine glycans are attached at residues Asn19, Asn20, Asn32, Asn205, Asn210, Asn234, Asn290, and Asn311. Residues 22-312 (TTPSPIITSS…SFEFKKLENQ (291 aa)) are involved in dsRNA-binding. The chain crosses the membrane as a helical span at residues 320-340 (LMMIFLTTPCLLFLPIVINII). Topologically, residues 341-429 (KNSRKLAPSQ…KQDSLSLHGQ (89 aa)) are cytoplasmic. The segment at 360–390 (PSEQRDMDLSHDEQQNTSSELENNGEIPAAE) is disordered. Residues 362–373 (EQRDMDLSHDEQ) are compositionally biased toward basic and acidic residues. A helical membrane pass occupies residues 430–450 (MLQYPVAIILPVLMHTAIEFH). The Extracellular segment spans residues 451–481 (KWTTSTMANRDEMCFHNHACARPLGELRAWN). A helical membrane pass occupies residues 482-502 (NIITNIGYTLYGAIFIVLSIC). The Cytoplasmic segment spans residues 503 to 510 (RRGRHEYS). A helical membrane pass occupies residues 511–531 (HVFGTYECTLLDVTIGVFMVL). At 532-543 (QSIASATYHICP) the chain is on the extracellular side. The helical transmembrane segment at 544-564 (SDVAFQFDTPCIQVICGLLMV) threads the bilayer. At 565–575 (RQWFVRHESPS) the chain is on the cytoplasmic side. Residues 576–596 (PAYTNILLVGVVSLNFLISAF) traverse the membrane as a helical segment. Residues 597-599 (SKT) lie on the Extracellular side of the membrane. A helical membrane pass occupies residues 600-620 (SYVRFIIAVIHVIVVGSICLA). Residues 621–633 (KERSLGSEKLKTR) are Cytoplasmic-facing. Residues 634–654 (FFIMAFSMGNFAAIVMYLTLS) form a helical membrane-spanning segment. The Extracellular segment spans residues 655 to 659 (AFHLN). A helical transmembrane segment spans residues 660–680 (QIATYCFIINCIMYLMYYGCM). At 681 to 691 (KVLHSERITSK) the chain is on the cytoplasmic side. The helical transmembrane segment at 692-712 (AKLCGALSLLAWAVAGFFFFQ) threads the bilayer. The Extracellular portion of the chain corresponds to 713–741 (DDTDWTRSAAASRALNKPCLLLGFFGSHD). Residues 742 to 762 (LWHIFGALAGLFTFIFVSFVD) traverse the membrane as a helical segment. The Cytoplasmic segment spans residues 763-776 (DDLINTRKTSINIF).

It belongs to the SID1 family. May self-associate to form multimers. In terms of tissue distribution, expressed in most non-neuronal cells, including body wall muscle cells.

The protein localises to the cell membrane. Its function is as follows. Plays a role in RNA-mediated gene silencing by acting cell-autonomously as a channel for the transport of double-stranded RNA (dsRNA) between cells. Mediates the spread of dsRNA and subsequent silencing of genes in cells distant from the site of dsRNA introduction. Selective for dsRNA. Preferentially binds long dsRNA, from 50 base pairs up to 700. Short 20 base-pair long molecules are not bound. May also bind dsDNA, but with lower affinity. Binding may be sequence-independent. Required for avoidance behavior induced by small RNAs derived from pathogenic bacteria such as P.aeruginosa. The chain is Systemic RNA interference defective protein 1 from Caenorhabditis elegans.